Here is a 312-residue protein sequence, read N- to C-terminus: Ankyrin repeat family A protein 2 (312 aa).

ANK repeat units follow at residues 147-179 (ANSL…HTDE), 180-212 (EGFT…LLGK), 213-245 (GRES…EYDW), 246-278 (NGGT…IETD), and 279-312 (SGYN…NIRE).

In terms of assembly, interacts (via ANK repeats) with CCDC8 (via PxLPxI/L motif); mediates the interaction with the 3M complex which is composed of CCDC8, CUL7 and OBSL1. Interacts (via ANK repeats) with HDAC4 (via PxLPxI/L motif). Interacts (via ANK repeats) with HDAC5 (via PxLPxI/L motif). Interacts (via ANK repeats) with LRP2/megalin (via PxLPxI/L motif). Interacts (via ANK repeats) with RFX7 (via PxLPxI/L motif). Interacts with AHRR. Interacts with NEK6.

Its subcellular location is the cytoplasm. The protein localises to the cytoskeleton. The protein resides in the membrane. May regulate the interaction between the 3M complex and the histone deacetylases HDAC4 and HDAC5. May also regulate LRP2/megalin. This chain is Ankyrin repeat family A protein 2 (Ankra2), found in Mus musculus (Mouse).